The primary structure comprises 794 residues: Signal transducer and activator of transcription 5A (794 aa).

Tyrosine 90 is subject to Phosphotyrosine. Serine 128 is modified (phosphoserine). An SH2 domain is found at tryptophan 589 to valine 686. At tyrosine 682 the chain carries Phosphotyrosine. Tyrosine 694 carries the phosphotyrosine; by JAK2 modification. The tract at residues proline 771 to serine 794 is disordered.

Belongs to the transcription factor STAT family. In terms of assembly, forms a homodimer or a heterodimer with a related family member. Binds NR3C1. Interacts with NCOA1 and SOCS7. Interacts with ERBB4. Interacts with EBF4. Interacts with CD69. ISGylated. In terms of processing, tyrosine phosphorylated in response to KITLG/SCF, IL2, IL3, IL7, IL15, CSF2/GMCSF, GH1, PRL, EPO and THPO. Activated KIT promotes phosphorylation on tyrosine residues and subsequent translocation to the nucleus. Tyrosine phosphorylated in response to constitutively activated FGFR1, FGFR2, FGFR3 and FGFR4. Tyrosine phosphorylation is required for DNA-binding activity and dimerization. Serine phosphorylation is also required for maximal transcriptional activity. Tyrosine phosphorylated in response to signaling via activated FLT3; wild-type FLT3 results in much weaker phosphorylation than constitutively activated mutant FLT3. Alternatively, can be phosphorylated by JAK2 at Tyr-694.

It is found in the cytoplasm. Its subcellular location is the nucleus. Carries out a dual function: signal transduction and activation of transcription. Mediates cellular responses to the cytokine KITLG/SCF and other growth factors. May mediate cellular responses to activated FGFR1, FGFR2, FGFR3 and FGFR4. Binds to the GAS element and activates PRL-induced transcription. Regulates the expression of milk proteins during lactation. In Bos taurus (Bovine), this protein is Signal transducer and activator of transcription 5A (STAT5A).